Consider the following 485-residue polypeptide: N-acetylglucosaminyltransferase (485 aa).

The protein belongs to the NodC/HAS family.

It is found in the cell membrane. May be involved in the synthesis of NodRm-1, a sulfated N-acyl-beta-1,4-tetrasaccharide of N-acetylglucosamine which initiates a series of events in the host plant species leading eventually to nodulation. The chain is N-acetylglucosaminyltransferase (nodC) from Bradyrhizobium diazoefficiens (strain JCM 10833 / BCRC 13528 / IAM 13628 / NBRC 14792 / USDA 110).